Reading from the N-terminus, the 351-residue chain is DNA polymerase IV (351 aa).

A UmuC domain is found at 4 to 185; it reads IIHVDMDCFY…LPLGKIPGVG (182 aa). Positions 8 and 103 each coordinate Mg(2+). Glu-104 is a catalytic residue.

It belongs to the DNA polymerase type-Y family. As to quaternary structure, monomer. Requires Mg(2+) as cofactor.

Its subcellular location is the cytoplasm. It carries out the reaction DNA(n) + a 2'-deoxyribonucleoside 5'-triphosphate = DNA(n+1) + diphosphate. In terms of biological role, poorly processive, error-prone DNA polymerase involved in untargeted mutagenesis. Copies undamaged DNA at stalled replication forks, which arise in vivo from mismatched or misaligned primer ends. These misaligned primers can be extended by PolIV. Exhibits no 3'-5' exonuclease (proofreading) activity. May be involved in translesional synthesis, in conjunction with the beta clamp from PolIII. The chain is DNA polymerase IV from Citrobacter koseri (strain ATCC BAA-895 / CDC 4225-83 / SGSC4696).